A 1464-amino-acid polypeptide reads, in one-letter code: DNA polymerase III PolC-type (1464 aa).

The 157-residue stretch at 426 to 582 (YVVFDVETTG…YDAEATGRLL (157 aa)) folds into the Exonuclease domain.

The protein belongs to the DNA polymerase type-C family. PolC subfamily.

Its subcellular location is the cytoplasm. It catalyses the reaction DNA(n) + a 2'-deoxyribonucleoside 5'-triphosphate = DNA(n+1) + diphosphate. Its function is as follows. Required for replicative DNA synthesis. This DNA polymerase also exhibits 3' to 5' exonuclease activity. The sequence is that of DNA polymerase III PolC-type from Streptococcus thermophilus (strain ATCC BAA-491 / LMD-9).